The primary structure comprises 454 residues: Protein translocase subunit SecY (454 aa).

10 helical membrane-spanning segments follow: residues Leu43–Ile63, Phe97–Ile117, Thr144–Phe164, Ile168–Ile188, Ser201–Phe221, Ile226–Ile246, Pro289–Leu309, Ile334–Pro354, Leu390–Phe410, and Ile414–Leu434.

The protein belongs to the SecY/SEC61-alpha family. Component of the plastid Sec protein translocase complex, which is composed of at least SecY and SecE.

It localises to the plastid. It is found in the chloroplast thylakoid membrane. In terms of biological role, the central subunit of the protein translocation channel SecYE. Consists of two halves formed by TMs 1-5 and 6-10. These two domains form a lateral gate at the front which open onto the bilayer between TMs 2 and 7, and are clamped together by SecE at the back. The channel is closed by both a pore ring composed of hydrophobic SecY resides and a short helix (helix 2A) on the extracellular side of the membrane which forms a plug. This is Protein translocase subunit SecY from Heterosigma akashiwo (strain NIES-293 / 8280G21-1).